The sequence spans 211 residues: Urease accessory protein UreF (211 aa).

The tract at residues 68 to 93 is disordered; the sequence is LAPDGADRETDARTPSPAARDASRSQ.

Belongs to the UreF family. UreD, UreF and UreG form a complex that acts as a GTP-hydrolysis-dependent molecular chaperone, activating the urease apoprotein by helping to assemble the nickel containing metallocenter of UreC. The UreE protein probably delivers the nickel.

The protein resides in the cytoplasm. Functionally, required for maturation of urease via the functional incorporation of the urease nickel metallocenter. This Mycobacterium marinum (strain ATCC BAA-535 / M) protein is Urease accessory protein UreF.